A 580-amino-acid chain; its full sequence is Pentatricopeptide repeat-containing protein At5g10690 (580 aa).

9 PPR repeats span residues 76–110, 112–142, 151–181, 189–223, 224–254, 266–296, 302–337, 342–376, and 382–417; these read NTIV…GGIG, DSIS…IEYG, SSSL…YDIL, SVLI…RLEP, DRLT…MKEK, DVVT…MKLC, DRTA…GANE, KPHL…SSGS, and QQEA…KTIP. Positions 486–553 constitute a CBS domain; the sequence is VPIVDDRGSC…IVVHCGNFSG (68 aa).

Belongs to the PPR family. P subfamily.

This Arabidopsis thaliana (Mouse-ear cress) protein is Pentatricopeptide repeat-containing protein At5g10690 (CBSPPR1).